The sequence spans 306 residues: Tryptophan 2,3-dioxygenase (306 aa).

Residues 75–79 (FIIQH), Y137, and R141 contribute to the substrate site. H264 contacts heme. Substrate is bound at residue T278.

This sequence belongs to the tryptophan 2,3-dioxygenase family. As to quaternary structure, homotetramer. Heme is required as a cofactor.

It carries out the reaction L-tryptophan + O2 = N-formyl-L-kynurenine. It functions in the pathway amino-acid degradation; L-tryptophan degradation via kynurenine pathway; L-kynurenine from L-tryptophan: step 1/2. Its function is as follows. Heme-dependent dioxygenase that catalyzes the oxidative cleavage of the L-tryptophan (L-Trp) pyrrole ring and converts L-tryptophan to N-formyl-L-kynurenine. Catalyzes the oxidative cleavage of the indole moiety. This chain is Tryptophan 2,3-dioxygenase, found in Paraburkholderia phytofirmans (strain DSM 17436 / LMG 22146 / PsJN) (Burkholderia phytofirmans).